An 84-amino-acid chain; its full sequence is Large ribosomal subunit protein bL27 (84 aa).

A disordered region spans residues 1 to 21 (MAHKKGGGSSKNGRDSQSKRL).

It belongs to the bacterial ribosomal protein bL27 family.

This chain is Large ribosomal subunit protein bL27, found in Brachyspira hyodysenteriae (strain ATCC 49526 / WA1).